The primary structure comprises 136 residues: Large ribosomal subunit protein uL16 (136 aa).

Belongs to the universal ribosomal protein uL16 family. As to quaternary structure, part of the 50S ribosomal subunit.

Its function is as follows. Binds 23S rRNA and is also seen to make contacts with the A and possibly P site tRNAs. In Proteus mirabilis (strain HI4320), this protein is Large ribosomal subunit protein uL16.